The following is a 394-amino-acid chain: Major outer membrane porin, serovar B (394 aa).

The first 22 residues, 1-22 (MKKLLKSVLVFAALSSASSLQA), serve as a signal peptide directing secretion.

Belongs to the chlamydial porin (CP) (TC 1.B.2) family. In terms of assembly, part of a disulfide cross-linked outer membrane complex (COMC) composed of the major outer membrane porin (MOMP), the small cysteine-rich protein (OmcA) and the large cysteine-rich periplasmic protein (OmcB).

Its subcellular location is the cell outer membrane. In elementary bodies (EBs, the infectious stage, which is able to survive outside the host cell) provides the structural integrity of the outer envelope through disulfide cross-links with the small cysteine-rich protein and the large cysteine-rich periplasmic protein. It has been described in publications as the Sarkosyl-insoluble COMC (Chlamydia outer membrane complex), and serves as the functional equivalent of peptidoglycan. In terms of biological role, permits diffusion of specific solutes through the outer membrane. This is Major outer membrane porin, serovar B (ompA) from Chlamydia trachomatis.